Here is a 108-residue protein sequence, read N- to C-terminus: uncharacterized protein (108 aa).

The segment covering 39-68 has biased composition (low complexity); it reads GLRSRSGTGSGNSRNGLKESGGSRSGPGKP. The disordered stretch occupies residues 39 to 95; sequence GLRSRSGTGSGNSRNGLKESGGSRSGPGKPRGNRKSSRRIRPRPTSEKPRGYWRSSW. Basic residues predominate over residues 69 to 80; it reads RGNRKSSRRIRP.

This is an uncharacterized protein from Acidithiobacillus ferridurans.